A 273-amino-acid polypeptide reads, in one-letter code: Ribosomal RNA small subunit methyltransferase A (273 aa).

S-adenosyl-L-methionine is bound by residues asparagine 18, leucine 20, glycine 45, glutamate 66, aspartate 91, and asparagine 113.

This sequence belongs to the class I-like SAM-binding methyltransferase superfamily. rRNA adenine N(6)-methyltransferase family. RsmA subfamily.

The protein resides in the cytoplasm. It carries out the reaction adenosine(1518)/adenosine(1519) in 16S rRNA + 4 S-adenosyl-L-methionine = N(6)-dimethyladenosine(1518)/N(6)-dimethyladenosine(1519) in 16S rRNA + 4 S-adenosyl-L-homocysteine + 4 H(+). Specifically dimethylates two adjacent adenosines (A1518 and A1519) in the loop of a conserved hairpin near the 3'-end of 16S rRNA in the 30S particle. May play a critical role in biogenesis of 30S subunits. This Escherichia coli O139:H28 (strain E24377A / ETEC) protein is Ribosomal RNA small subunit methyltransferase A.